A 145-amino-acid polypeptide reads, in one-letter code: uncharacterized protein (145 aa).

This is an uncharacterized protein from Methanothrix soehngenii (Methanosaeta concilii).